A 204-amino-acid polypeptide reads, in one-letter code: 3-isopropylmalate dehydratase small subunit (204 aa).

The protein belongs to the LeuD family. LeuD type 1 subfamily. Heterodimer of LeuC and LeuD.

The enzyme catalyses (2R,3S)-3-isopropylmalate = (2S)-2-isopropylmalate. It functions in the pathway amino-acid biosynthesis; L-leucine biosynthesis; L-leucine from 3-methyl-2-oxobutanoate: step 2/4. Its function is as follows. Catalyzes the isomerization between 2-isopropylmalate and 3-isopropylmalate, via the formation of 2-isopropylmaleate. This Roseiflexus castenholzii (strain DSM 13941 / HLO8) protein is 3-isopropylmalate dehydratase small subunit.